The chain runs to 258 residues: Aquaglyceroporin (258 aa).

Topologically, residues 1–16 (MKVTFGNEYIKNFLGE) are cytoplasmic. A helical membrane pass occupies residues 17–37 (FIGTFVLMFLGEGTTANHFAV). The Extracellular portion of the chain corresponds to 38 to 45 (PIKNDWLR). The helical transmembrane segment at 46 to 66 (LCIGWGLGVFFGILISAKLSG) threads the bilayer. Residues A67 and N70 each contribute to the glycerol site. At 67–87 (AHLNLAVTVGLSTIKKFNYKQ) the chain is on the cytoplasmic side. Residues 88–108 (IPLYFAGQLLGALSATASVYG) form a helical membrane-spanning segment. At 109–133 (LYYGFVSDQTIPKFSWETGKHANVH) the chain is on the extracellular side. A helical membrane pass occupies residues 134–154 (IASAFMHEFILTGILLLIILS). The Cytoplasmic portion of the chain corresponds to 155 to 171 (VTDENICGKFHVLKVSS). A helical transmembrane segment spans residues 172–192 (IVGLAIICIGISFGGNTGFAL). Residues G189, F190, N193, and R196 each coordinate glycerol. The Extracellular portion of the chain corresponds to 193-217 (NPSRDLGARILSAIAYGFEAFTRDK). A helical membrane pass occupies residues 218–238 (CYFWIPLIAPIIGSIIFCQIY). The Cytoplasmic segment spans residues 239-258 (DKIVAPLVVISEHDKGALEI).

The protein belongs to the MIP/aquaporin (TC 1.A.8) family.

It is found in the cell membrane. It catalyses the reaction H2O(in) = H2O(out). The catalysed reaction is glycerol(in) = glycerol(out). The enzyme catalyses urea(in) = urea(out). Functionally, mediates water and glycerol transport across the cell membrane. Permeable to urea. Required for efficient progression of parasites through the liver stages. The polypeptide is Aquaglyceroporin (Plasmodium berghei (strain Anka)).